Reading from the N-terminus, the 311-residue chain is Protoheme IX farnesyltransferase 1 (311 aa).

9 consecutive transmembrane segments (helical) span residues 31–51, 52–72, 97–117, 119–139, 152–172, 179–199, 225–245, 247–267, and 281–301; these read VMAL…GAVN, PVIA…AGAL, VTPG…VMTL, VLVG…YIVI, IVIG…AATG, LVLF…LALF, ILAY…FGFT, GYYG…SWKV, and LFAY…ADTI.

It belongs to the UbiA prenyltransferase family. Protoheme IX farnesyltransferase subfamily.

It localises to the cell inner membrane. The enzyme catalyses heme b + (2E,6E)-farnesyl diphosphate + H2O = Fe(II)-heme o + diphosphate. It functions in the pathway porphyrin-containing compound metabolism; heme O biosynthesis; heme O from protoheme: step 1/1. In terms of biological role, converts heme B (protoheme IX) to heme O by substitution of the vinyl group on carbon 2 of heme B porphyrin ring with a hydroxyethyl farnesyl side group. The chain is Protoheme IX farnesyltransferase 1 from Mesorhizobium japonicum (strain LMG 29417 / CECT 9101 / MAFF 303099) (Mesorhizobium loti (strain MAFF 303099)).